A 61-amino-acid chain; its full sequence is UPF0391 membrane protein Ajs_0703 (61 aa).

A run of 2 helical transmembrane segments spans residues alanine 5–alanine 25 and valine 33–isoleucine 53.

The protein belongs to the UPF0391 family.

The protein localises to the cell membrane. The sequence is that of UPF0391 membrane protein Ajs_0703 from Acidovorax sp. (strain JS42).